The sequence spans 367 residues: 3-dehydroquinate synthase (367 aa).

NAD(+) is bound by residues 112–116 (GVIGD), 136–137 (TT), Lys149, Lys158, and 176–179 (TLKT). Residues Glu191, His256, and His273 each coordinate Zn(2+).

This sequence belongs to the sugar phosphate cyclases superfamily. Dehydroquinate synthase family. Requires NAD(+) as cofactor. The cofactor is Co(2+). It depends on Zn(2+) as a cofactor.

The protein localises to the cytoplasm. The enzyme catalyses 7-phospho-2-dehydro-3-deoxy-D-arabino-heptonate = 3-dehydroquinate + phosphate. Its pathway is metabolic intermediate biosynthesis; chorismate biosynthesis; chorismate from D-erythrose 4-phosphate and phosphoenolpyruvate: step 2/7. Its function is as follows. Catalyzes the conversion of 3-deoxy-D-arabino-heptulosonate 7-phosphate (DAHP) to dehydroquinate (DHQ). This Prochlorococcus marinus (strain SARG / CCMP1375 / SS120) protein is 3-dehydroquinate synthase.